The primary structure comprises 312 residues: Tetraacyldisaccharide 4'-kinase (312 aa).

60-67 (IAGGSGKT) serves as a coordination point for ATP.

It belongs to the LpxK family.

It catalyses the reaction a lipid A disaccharide + ATP = a lipid IVA + ADP + H(+). It functions in the pathway glycolipid biosynthesis; lipid IV(A) biosynthesis; lipid IV(A) from (3R)-3-hydroxytetradecanoyl-[acyl-carrier-protein] and UDP-N-acetyl-alpha-D-glucosamine: step 6/6. In terms of biological role, transfers the gamma-phosphate of ATP to the 4'-position of a tetraacyldisaccharide 1-phosphate intermediate (termed DS-1-P) to form tetraacyldisaccharide 1,4'-bis-phosphate (lipid IVA). The protein is Tetraacyldisaccharide 4'-kinase of Helicobacter pylori (strain HPAG1).